A 346-amino-acid chain; its full sequence is Putative aminopeptidase YhfE (346 aa).

A divalent metal cation contacts are provided by H68 and D185. E219 acts as the Proton acceptor in catalysis. A divalent metal cation-binding residues include E220, D240, and H320.

Belongs to the peptidase M42 family. It depends on a divalent metal cation as a cofactor.

The polypeptide is Putative aminopeptidase YhfE (yhfE) (Bacillus subtilis (strain 168)).